Here is a 338-residue protein sequence, read N- to C-terminus: Cytochrome P450 monooxygenase easK (338 aa).

Residues 1-16 (MLLLTFTLPVVTLLLA) form the signal peptide. N-linked (GlcNAc...) asparagine glycosylation is found at N240 and N327.

Belongs to the cytochrome P450 family. Heme is required as a cofactor.

Its pathway is alkaloid biosynthesis; ergot alkaloid biosynthesis. Its function is as follows. Cytochrome P450 monooxygenase; part of the gene cluster that mediates the biosynthesis of fumiclavanine C, a fungal ergot alkaloid. DmaW catalyzes the first step of ergot alkaloid biosynthesis by condensing dimethylallyl diphosphate (DMAP) and tryptophan to form 4-dimethylallyl-L-tryptophan. The second step is catalyzed by the methyltransferase easF that methylates 4-dimethylallyl-L-tryptophan in the presence of S-adenosyl-L-methionine, resulting in the formation of 4-dimethylallyl-L-abrine. The catalase easC and the FAD-dependent oxidoreductase easE then transform 4-dimethylallyl-L-abrine to chanoclavine-I which is further oxidized by EasD in the presence of NAD(+), resulting in the formation of chanoclavine-I aldehyde. EasA reduces chanoclavine-I aldehyde to dihydrochanoclavine-I aldehyde that spontaneously dehydrates to form 6,8-dimethyl-6,7-didehydroergoline. EasG then catalyzes the reduction of 6,8-dimethyl-6,7-didehydroergoline to form festuclavine. Hydrolysis of festuclavine by easM then leads to the formation of fumigaclavine B which is in turn acetylated by easN to fumigaclavine A. Finally, easL catalyzes the conversion of fumigaclavine A into fumigaclavine C by attaching a dimethylallyl moiety to C-2 of the indole nucleus. The role of the cytochrome P450 monooxygenase easK within the cluster has not been identified yet. The chain is Cytochrome P450 monooxygenase easK from Aspergillus fumigatus (strain ATCC MYA-4609 / CBS 101355 / FGSC A1100 / Af293) (Neosartorya fumigata).